Reading from the N-terminus, the 118-residue chain is Small ribosomal subunit protein bTHXc (118 aa).

The N-terminal 55 residues, 1 to 55 (MASLILGAPPRVTVALPSSRLSSSHSETAGVSLSCFTHQFSLSTSSSSSIPLVYC), are a transit peptide targeting the chloroplast. Residues 61–118 (KTAKGKRFNHSFGNARPRNKSKGRGPERVPVPPAPPRKDKFENDEKIKIDIDESLFSN) are disordered. Positions 96-111 (PRKDKFENDEKIKIDI) are enriched in basic and acidic residues. Position 117 is a phosphoserine (Ser117).

It belongs to the bacterial ribosomal protein bTHX family. In terms of assembly, part of the 30S ribosomal subunit.

The protein resides in the plastid. It localises to the chloroplast. The sequence is that of Small ribosomal subunit protein bTHXc (RPS31) from Arabidopsis thaliana (Mouse-ear cress).